Here is a 100-residue protein sequence, read N- to C-terminus: NADH-quinone oxidoreductase subunit K (100 aa).

3 consecutive transmembrane segments (helical) span residues 4 to 24, 28 to 48, and 60 to 80; these read LFHGLFLSLILFILGLTSLIV, ILFMLISLEIMMNAAALALVV, and IMYILAITLAASEASIALALL.

Belongs to the complex I subunit 4L family. As to quaternary structure, NDH-1 is composed of 13 different subunits. Subunits NuoA, H, J, K, L, M, N constitute the membrane sector of the complex.

The protein resides in the cell membrane. It catalyses the reaction a quinone + NADH + 5 H(+)(in) = a quinol + NAD(+) + 4 H(+)(out). NDH-1 shuttles electrons from NADH, via FMN and iron-sulfur (Fe-S) centers, to quinones in the respiratory chain. The immediate electron acceptor for the enzyme in this species is believed to be ubiquinone. Couples the redox reaction to proton translocation (for every two electrons transferred, four hydrogen ions are translocated across the cytoplasmic membrane), and thus conserves the redox energy in a proton gradient. This chain is NADH-quinone oxidoreductase subunit K, found in Buchnera aphidicola subsp. Schizaphis graminum (strain Sg).